The chain runs to 830 residues: MGWLCPGLTFSVSCLILVWAAGSGVTCVSPGGVRVLEWPICLSDYVSTSTCEWRMAGPVNCSAEFRLSYQLKFFNTENHTTCVPENRAGSVCVCHMLMESIVIVDTYQLDLWAGEQLLWNSSFKPSQNVKPLAPRNLMVHANISHTWLLTWSNPYPSESYLYSELTYLVNISNENDPTDFRIYNVTYLGPTLRFPANTLKSGAAYSARVKAWAQRYNSTWSEWSPSVKWLNYYEEPLEQRLPLGVSISCVVILIICLSCYFGIIRIKKEWWDQIPNPAHSPLVAIVIQDSQVSLWGKRSRGQEPAKCPRWKTCLTKLLPCFLEHGVDRDEDSSKAARNGPSQGPAKAAWRPVEVSKTILWPESISVVRCVELFEAQVENEEEEEEEDKGSFCPSPENSGGSFQEGREGIAARLTESLFLDLLGDESGAFSPQGMGQSCLLPPLENASAPMPWAEFPRVGSPEASSQGKEQPLNPEPSPQATPTQSLASLAFPELPAVIADNPAYRSFSTFLSQSSDPGELDSDPELAEALEEVEPSLPAAPQPSEPPPTLQPEPETWEQILRQSVLQRRAAPAPASGPSSSGYREFVHAVEQGTQDRRAAGSGPCGEAGYKAFSSLLAGSASCPGTSGLEPSSGESGYKPFQSLPPGCPETPVPTPLFTFGLDMEPPPSPQNPPFPGSSAECPGLEPAVKGEDGQKPPLALEQAADPLRDDLGSGIVYSALTCHLCGHLKQCHGQEDGGKVHVVASPCCSCCCEDGSPPMVTPLRAPDAPSSGVPLEASLSPASLALLGVSREGKIPPCLQITPSNVQSSSQTPTAVAMLSPGPACMDTS.

The signal sequence occupies residues 1-32 (MGWLCPGLTFSVSCLILVWAAGSGVTCVSPGG). Topologically, residues 33–240 (VRVLEWPICL…NYYEEPLEQR (208 aa)) are extracellular. Cysteines 41 and 51 form a disulfide. Asparagine 60 and asparagine 78 each carry an N-linked (GlcNAc...) asparagine glycan. An intrachain disulfide couples cysteine 82 to cysteine 94. Residues asparagine 120, asparagine 142, and asparagine 170 are each glycosylated (N-linked (GlcNAc...) asparagine). The Fibronectin type-III domain maps to 133 to 232 (APRNLMVHAN…WSPSVKWLNY (100 aa)). A Phosphoserine modification is found at serine 172. 2 N-linked (GlcNAc...) asparagine glycosylation sites follow: asparagine 184 and asparagine 217. A WSXWS motif motif is present at residues 220-224 (WSEWS). A helical membrane pass occupies residues 241–264 (LPLGVSISCVVILIICLSCYFGII). The Cytoplasmic segment spans residues 265 to 830 (RIKKEWWDQI…SPGPACMDTS (566 aa)). A Box 1 motif motif is present at residues 270–278 (WWDQIPNPA). The segment covering 378–387 (ENEEEEEEED) has biased composition (acidic residues). Disordered stretches follow at residues 378 to 403 (ENEEEEEEEDKGSFCPSPENSGGSFQ) and 450 to 488 (MPWAEFPRVGSPEASSQGKEQPLNPEPSPQATPTQSLAS). The tract at residues 444–564 (ENASAPMPWA…ETWEQILRQS (121 aa)) is required for IRS1 activation and IL4-induced cell growth. Tyrosine 504 is modified (phosphotyrosine). Disordered stretches follow at residues 508–610 (STFL…EAGY) and 623–696 (CPGT…DGQK). The segment covering 518-534 (GELDSDPELAEALEEVE) has biased composition (acidic residues). Positions 538 to 551 (PAAPQPSEPPPTLQ) are enriched in pro residues. Residues 564–662 (SVLQRRAAPA…VPTPLFTFGL (99 aa)) are required for IL4-induced gene expression. The segment covering 570-582 (AAPAPASGPSSSG) has biased composition (low complexity). A phosphotyrosine mark is found at tyrosine 583 and tyrosine 610. Polar residues predominate over residues 623–635 (CPGTSGLEPSSGE). Position 638 is a phosphotyrosine (tyrosine 638). Pro residues-rich tracts occupy residues 646–655 (PGCPETPVPT) and 665–676 (EPPPSPQNPPFP). An ITIM motif motif is present at residues 716–721 (IVYSAL). Positions 811-830 (SQTPTAVAMLSPGPACMDTS) are disordered.

The protein belongs to the type I cytokine receptor family. Type 4 subfamily. In terms of assembly, the functional IL4 receptor is formed by initial binding of IL4 to IL4R. Subsequent recruitment to the complex of the common gamma chain, in immune cells, creates a type I receptor and, in non-immune cells, of IL13RA1 forms a type II receptor. IL4R can also interact with the IL13/IL13RA1 complex to form a similar type II receptor. Interacts with PIK3C3. Interacts with the SH2-containing phosphatases, PTPN6/SHIP1, PTPN11/SHIP2 and INPP5D/SHIP. Interacts with JAK1 through a Box 1-containing region; inhibited by SOCS5. Interacts with SOCS5; inhibits IL4 signaling. Interacts with JAK3. Interacts with CLM1. Interacts with IL13RA2. On IL4 binding, phosphorylated on C-terminal tyrosine residues.

It is found in the membrane. In terms of biological role, receptor for both interleukin 4 and interleukin 13. Couples to the JAK1/2/3-STAT6 pathway. The IL4 response is involved in promoting Th2 differentiation. The IL4/IL13 responses are involved in regulating IgE production and, chemokine and mucus production at sites of allergic inflammation. In certain cell types, can signal through activation of insulin receptor substrates, IRS1/IRS2. The protein is Interleukin-4 receptor subunit alpha (IL4R) of Sus scrofa (Pig).